The sequence spans 327 residues: Phenylalanine--tRNA ligase alpha subunit (327 aa).

E252 contributes to the Mg(2+) binding site.

The protein belongs to the class-II aminoacyl-tRNA synthetase family. Phe-tRNA synthetase alpha subunit type 1 subfamily. In terms of assembly, tetramer of two alpha and two beta subunits. Mg(2+) serves as cofactor.

Its subcellular location is the cytoplasm. It carries out the reaction tRNA(Phe) + L-phenylalanine + ATP = L-phenylalanyl-tRNA(Phe) + AMP + diphosphate + H(+). The chain is Phenylalanine--tRNA ligase alpha subunit from Salmonella newport (strain SL254).